The primary structure comprises 146 residues: Cysteine protease inhibitor 3 (146 aa).

Intrachain disulfides connect Cys-8/Cys-60 and Cys-109/Cys-115.

Belongs to the protease inhibitor I3 (leguminous Kunitz-type inhibitor) family.

The protein localises to the vacuole. Inhibitor of cysteine proteases. May protect the plant by inhibiting proteases of invading organisms. This Solanum tuberosum (Potato) protein is Cysteine protease inhibitor 3.